Reading from the N-terminus, the 760-residue chain is General transcription and DNA repair factor IIH helicase subunit XPD (760 aa).

The 277-residue stretch at 7 to 283 (GLLVYFPYDY…KETDEQRLRD (277 aa)) folds into the Helicase ATP-binding domain. ATP is bound at residue 42–49 (MPSGTGKT). Residues Cys-116, Cys-134, Cys-155, and Cys-190 each coordinate [4Fe-4S] cluster. The short motif at 234 to 237 (DEAH) is the DEAH box element. The interval 438-637 (MDASLAIKPV…TQSRILKARL (200 aa)) is mediates interaction with MMS19.

This sequence belongs to the helicase family. RAD3/XPD subfamily. Component of the 7-subunit TFIIH core complex composed of XPB/ERCC3, XPD/ERCC2, GTF2H1, GTF2H2, GTF2H3, GTF2H4 and GTF2H5, which is active in NER. The core complex associates with the 3-subunit CDK-activating kinase (CAK) module composed of CCNH/cyclin H, CDK7 and MNAT1 to form the 10-subunit holoenzyme (holo-TFIIH) active in transcription. The interaction with GTF2H2 results in the stimulation of the 5'--&gt;3' helicase activity. Component of the MMXD complex, which includes CIAO1, ERCC2, CIAO2B, MMS19 and SLC25A5. Interacts with CIAO1 and CIAO2B; the interaction WITH CIAO2B is direct. Interacts with ATF7IP. Interacts directly with MMS19. Part of TBP-based Pol II pre-initiation complex (PIC), in which Pol II core assembles with general transcription factors and other specific initiation factors including GTF2E1, GTF2E2, GTF2F1, GTF2F2, TCEA1, ERCC2, ERCC3, GTF2H2, GTF2H3, GTF2H4, GTF2H5, GTF2A1, GTF2A2, GTF2B and TBP; this large multi-subunit PIC complex mediates DNA unwinding and targets Pol II core to the transcription start site where the first phosphodiester bond forms. Mg(2+) is required as a cofactor. Requires [4Fe-4S] cluster as cofactor. Post-translationally, ISGylated.

It localises to the nucleus. The protein resides in the cytoplasm. Its subcellular location is the cytoskeleton. It is found in the spindle. The enzyme catalyses Couples ATP hydrolysis with the unwinding of duplex DNA at the replication fork by translocating in the 5'-3' direction. This creates two antiparallel DNA single strands (ssDNA). The leading ssDNA polymer is the template for DNA polymerase III holoenzyme which synthesizes a continuous strand.. It catalyses the reaction ATP + H2O = ADP + phosphate + H(+). In terms of biological role, ATP-dependent 5'-3' DNA helicase, component of the general transcription and DNA repair factor IIH (TFIIH) core complex, which is involved in general and transcription-coupled nucleotide excision repair (NER) of damaged DNA and, when complexed to CDK-activating kinase (CAK), involved in transcription by RNA polymerase II. In NER, TFIIH acts by opening DNA around the lesion to allow the excision of the damaged oligonucleotide and its replacement by a new DNA fragment. The ATP-dependent helicase activity of XPD/ERCC2 is required for DNA opening. In transcription, TFIIH has an essential role in transcription initiation. When the pre-initiation complex (PIC) has been established, TFIIH is required for promoter opening and promoter escape. Phosphorylation of the C-terminal tail (CTD) of the largest subunit of RNA polymerase II by the kinase module CAK controls the initiation of transcription. XPD/ERCC2 acts by forming a bridge between CAK and the core-TFIIH complex. Involved in the regulation of vitamin-D receptor activity. As part of the mitotic spindle-associated MMXD complex it plays a role in chromosome segregation. Might have a role in aging process and could play a causative role in the generation of skin cancers. The chain is General transcription and DNA repair factor IIH helicase subunit XPD (Ercc2) from Mus musculus (Mouse).